Reading from the N-terminus, the 126-residue chain is Glycine cleavage system H protein (126 aa).

A Lipoyl-binding domain is found at threonine 21–lysine 103. At lysine 62 the chain carries N6-lipoyllysine.

This sequence belongs to the GcvH family. The glycine cleavage system is composed of four proteins: P, T, L and H. Requires (R)-lipoate as cofactor.

Functionally, the glycine cleavage system catalyzes the degradation of glycine. The H protein shuttles the methylamine group of glycine from the P protein to the T protein. The sequence is that of Glycine cleavage system H protein from Vibrio cholerae serotype O1 (strain ATCC 39541 / Classical Ogawa 395 / O395).